We begin with the raw amino-acid sequence, 100 residues long: MIPLSWYLLLSATLFSIGLIGFVIRRDLIVMLMCLEIMFNAVNIAFASFSYYNSNLTGQIFVLFSIAVAACEAVIGLAIVLALVRNTGINHSDEIVNLRG.

The next 3 membrane-spanning stretches (helical) occupy residues 4–24 (LSWY…GFVI), 29–49 (IVML…FASF), and 60–80 (IFVL…LAIV).

This sequence belongs to the complex I subunit 4L family. As to quaternary structure, NDH-1 is composed of 14 different subunits. Subunits NuoA, H, J, K, L, M, N constitute the membrane sector of the complex.

Its subcellular location is the cell inner membrane. The catalysed reaction is a quinone + NADH + 5 H(+)(in) = a quinol + NAD(+) + 4 H(+)(out). In terms of biological role, NDH-1 shuttles electrons from NADH, via FMN and iron-sulfur (Fe-S) centers, to quinones in the respiratory chain. The immediate electron acceptor for the enzyme in this species is believed to be ubiquinone. Couples the redox reaction to proton translocation (for every two electrons transferred, four hydrogen ions are translocated across the cytoplasmic membrane), and thus conserves the redox energy in a proton gradient. The protein is NADH-quinone oxidoreductase subunit K of Thermodesulfovibrio yellowstonii (strain ATCC 51303 / DSM 11347 / YP87).